The sequence spans 471 residues: uncharacterized protein (471 aa).

The next 4 membrane-spanning stretches (helical) occupy residues 10–30 (ALWL…LFVI), 46–66 (IDDR…WFAI), 87–107 (TLII…LYFS), and 280–300 (IVVG…LYFA).

The protein belongs to the bacterial sugar transferase family.

It localises to the cell membrane. The protein operates within glycan metabolism; exopolysaccharide biosynthesis. Its function is as follows. May function as a sugar transferase. This is an uncharacterized protein from Haemophilus influenzae (strain ATCC 51907 / DSM 11121 / KW20 / Rd).